The following is a 457-amino-acid chain: Acetylcholine receptor subunit alpha-1-A (457 aa).

An N-terminal signal peptide occupies residues Met1–Ser20. Over Ser21 to Leu230 the chain is Extracellular. Intrachain disulfides connect Cys148-Cys162 and Cys212-Cys213. The N-linked (GlcNAc...) asparagine glycan is linked to Asn161. Helical transmembrane passes span Pro231–Leu255, Ile263–Val281, and Tyr297–Ile316. Topologically, residues Asn317 to His428 are cytoplasmic. A helical membrane pass occupies residues Leu429–Ala447.

This sequence belongs to the ligand-gated ion channel (TC 1.A.9) family. Acetylcholine receptor (TC 1.A.9.1) subfamily. Alpha-1/CHRNA1 sub-subfamily. As to quaternary structure, one of the alpha chains that assemble within the acetylcholine receptor, a pentamer of two alpha chains, a beta, a delta, and a gamma or epsilon chains. In terms of tissue distribution, oocytes.

It is found in the postsynaptic cell membrane. The protein resides in the cell membrane. The catalysed reaction is K(+)(in) = K(+)(out). It catalyses the reaction Na(+)(in) = Na(+)(out). Functionally, upon acetylcholine binding, the AChR responds by an extensive change in conformation that affects all subunits and leads to opening of an ion-conducting channel across the plasma membrane. The protein is Acetylcholine receptor subunit alpha-1-A (chrna1-a) of Xenopus laevis (African clawed frog).